We begin with the raw amino-acid sequence, 268 residues long: 4-hydroxy-tetrahydrodipicolinate reductase (268 aa).

NAD(+) is bound by residues Gly-10–Met-15, Glu-36, Gly-99–Thr-101, and Ala-123–Met-126. The Proton donor/acceptor role is filled by His-156. His-157 contributes to the (S)-2,3,4,5-tetrahydrodipicolinate binding site. The Proton donor role is filled by Lys-160. Gly-166–Thr-167 provides a ligand contact to (S)-2,3,4,5-tetrahydrodipicolinate.

The protein belongs to the DapB family.

The protein resides in the cytoplasm. It carries out the reaction (S)-2,3,4,5-tetrahydrodipicolinate + NAD(+) + H2O = (2S,4S)-4-hydroxy-2,3,4,5-tetrahydrodipicolinate + NADH + H(+). It catalyses the reaction (S)-2,3,4,5-tetrahydrodipicolinate + NADP(+) + H2O = (2S,4S)-4-hydroxy-2,3,4,5-tetrahydrodipicolinate + NADPH + H(+). Its pathway is amino-acid biosynthesis; L-lysine biosynthesis via DAP pathway; (S)-tetrahydrodipicolinate from L-aspartate: step 4/4. In terms of biological role, catalyzes the conversion of 4-hydroxy-tetrahydrodipicolinate (HTPA) to tetrahydrodipicolinate. The protein is 4-hydroxy-tetrahydrodipicolinate reductase of Nitrosomonas europaea (strain ATCC 19718 / CIP 103999 / KCTC 2705 / NBRC 14298).